We begin with the raw amino-acid sequence, 197 residues long: FMN-dependent NADH:quinone oxidoreductase (197 aa).

Residues serine 10 and serine 17–serine 19 each bind FMN.

The protein belongs to the azoreductase type 1 family. Homodimer. Requires FMN as cofactor.

It catalyses the reaction 2 a quinone + NADH + H(+) = 2 a 1,4-benzosemiquinone + NAD(+). The catalysed reaction is N,N-dimethyl-1,4-phenylenediamine + anthranilate + 2 NAD(+) = 2-(4-dimethylaminophenyl)diazenylbenzoate + 2 NADH + 2 H(+). Its function is as follows. Quinone reductase that provides resistance to thiol-specific stress caused by electrophilic quinones. Functionally, also exhibits azoreductase activity. Catalyzes the reductive cleavage of the azo bond in aromatic azo compounds to the corresponding amines. This Mycoplasmoides gallisepticum (strain R(low / passage 15 / clone 2)) (Mycoplasma gallisepticum) protein is FMN-dependent NADH:quinone oxidoreductase.